The chain runs to 122 residues: MRHRNGNRKLNRTSSHRAAMLRNMANSLLTHETIVTTLPKAKELRRVVEPLITLGKKPSLANRRLAFDRTRDRDVVVKLFGDLGPRFTARNGGYVRVLKYGFRKGDNAPLALVELVDKPAAE.

It belongs to the bacterial ribosomal protein bL17 family. In terms of assembly, part of the 50S ribosomal subunit. Contacts protein L32.

The polypeptide is Large ribosomal subunit protein bL17 (Neisseria meningitidis serogroup C / serotype 2a (strain ATCC 700532 / DSM 15464 / FAM18)).